Here is a 441-residue protein sequence, read N- to C-terminus: tRNA modification GTPase MnmE (441 aa).

(6S)-5-formyl-5,6,7,8-tetrahydrofolate-binding residues include arginine 21, glutamate 78, and lysine 117. Residues glycine 211–lysine 363 form the TrmE-type G domain. K(+) is bound at residue asparagine 221. Residues asparagine 221 to threonine 226, threonine 240 to threonine 246, and aspartate 265 to glycine 268 contribute to the GTP site. Residue serine 225 participates in Mg(2+) binding. K(+)-binding residues include threonine 240, isoleucine 242, and threonine 245. Threonine 246 lines the Mg(2+) pocket. Lysine 441 is a binding site for (6S)-5-formyl-5,6,7,8-tetrahydrofolate.

The protein belongs to the TRAFAC class TrmE-Era-EngA-EngB-Septin-like GTPase superfamily. TrmE GTPase family. As to quaternary structure, homodimer. Heterotetramer of two MnmE and two MnmG subunits. The cofactor is K(+).

The protein resides in the cytoplasm. Its function is as follows. Exhibits a very high intrinsic GTPase hydrolysis rate. Involved in the addition of a carboxymethylaminomethyl (cmnm) group at the wobble position (U34) of certain tRNAs, forming tRNA-cmnm(5)s(2)U34. In Thermosipho melanesiensis (strain DSM 12029 / CIP 104789 / BI429), this protein is tRNA modification GTPase MnmE.